The following is a 608-amino-acid chain: uncharacterized protein (608 aa).

A signal peptide spans 1 to 38 (MWLQQRLKVFPGLLSSSWARRVLAVSGFLVIIYWYIFS). Residues 39–563 (GSLFRSFWYA…EEHMAKQYRG (525 aa)) lie on the Extracellular side of the membrane. Asn-337 is a glycosylation site (N-linked (GlcNAc...) asparagine). Residues 564-584 (LPFLFWFSVASLITLFHLFLF) traverse the membrane as a helical segment. Residues 585-608 (KLIYNEYCGPGAKPLFRSKEDTSV) lie on the Cytoplasmic side of the membrane.

It is found in the membrane. This is an uncharacterized protein from Xenopus tropicalis (Western clawed frog).